The following is a 279-amino-acid chain: Sulfur carrier protein FdhD (279 aa).

C122 serves as the catalytic Cysteine persulfide intermediate.

This sequence belongs to the FdhD family.

It is found in the cytoplasm. In terms of biological role, required for formate dehydrogenase (FDH) activity. Acts as a sulfur carrier protein that transfers sulfur from IscS to the molybdenum cofactor prior to its insertion into FDH. This Thermoplasma volcanium (strain ATCC 51530 / DSM 4299 / JCM 9571 / NBRC 15438 / GSS1) protein is Sulfur carrier protein FdhD.